Here is a 517-residue protein sequence, read N- to C-terminus: Cytochrome P450 monooxygenase TRI4 (517 aa).

The chain crosses the membrane as a helical span at residues 15 to 37 (AVGAAVAVGALYFFCQCFYNLYL). Asn-444 carries an N-linked (GlcNAc...) asparagine glycan. A heme-binding site is contributed by Cys-452.

Belongs to the cytochrome P450 family. The cofactor is heme.

It is found in the membrane. It participates in sesquiterpene biosynthesis; trichothecene biosynthesis. Cytochrome P450 monooxygenase; part of the gene cluster that mediates the production of the antimicrobial trichothecene harzianum A (HA) that plays a role in Botrytis cinerea antagonistic activity and plant defense priming. The biosynthesis of harzianum A begins with the cyclization of farnesyl diphosphate to trichodiene and is catalyzed by the trichodiene synthase TRI5. Trichodiene undergoes a series of oxygenations catalyzed by the cytochrome P450 monooxygenase TRI4. TRI4 controls the addition of 3 oxygens at C-2, C-11, and the C-12, C-13-epoxide to form the intermediate isotrichodiol. Isotrichodiol then undergoes a non-enzymatic isomerization and cyclization to form 12,13-epoxytrichothec-9-ene (EPT) which is further converted to trichodermol by the cytochrome P450 monooxygenase TRI11 via C-4 hydroxylation. The last step of HA synthesis is esterification of an octatriendioyl moiety to the C-4 oxygen of trichodermol. The octatriendioyl moiety is probably produced by the polyketide synthase TRI17 and the esterification performed by the trichothecene O-acetyltransferase TRI3. The protein is Cytochrome P450 monooxygenase TRI4 of Trichoderma arundinaceum.